The following is a 113-amino-acid chain: Nucleoid-associated protein Synpcc7942_0464 (113 aa).

Belongs to the YbaB/EbfC family. In terms of assembly, homodimer.

Its subcellular location is the cytoplasm. The protein localises to the nucleoid. Binds to DNA and alters its conformation. May be involved in regulation of gene expression, nucleoid organization and DNA protection. This chain is Nucleoid-associated protein Synpcc7942_0464, found in Synechococcus elongatus (strain ATCC 33912 / PCC 7942 / FACHB-805) (Anacystis nidulans R2).